The primary structure comprises 515 residues: 2-isopropylmalate synthase (515 aa).

The Pyruvate carboxyltransferase domain occupies 4-266 (IKIFDTTLRD…ETGLILKETK (263 aa)). Aspartate 13, histidine 201, histidine 203, and asparagine 237 together coordinate Mn(2+). The tract at residues 392 to 515 (KLIQFGVSYD…ANLTRLVYES (124 aa)) is regulatory domain.

This sequence belongs to the alpha-IPM synthase/homocitrate synthase family. LeuA type 1 subfamily. As to quaternary structure, homodimer. Requires Mn(2+) as cofactor.

The protein localises to the cytoplasm. It carries out the reaction 3-methyl-2-oxobutanoate + acetyl-CoA + H2O = (2S)-2-isopropylmalate + CoA + H(+). It participates in amino-acid biosynthesis; L-leucine biosynthesis; L-leucine from 3-methyl-2-oxobutanoate: step 1/4. Catalyzes the condensation of the acetyl group of acetyl-CoA with 3-methyl-2-oxobutanoate (2-ketoisovalerate) to form 3-carboxy-3-hydroxy-4-methylpentanoate (2-isopropylmalate). This chain is 2-isopropylmalate synthase, found in Oceanobacillus iheyensis (strain DSM 14371 / CIP 107618 / JCM 11309 / KCTC 3954 / HTE831).